A 360-amino-acid polypeptide reads, in one-letter code: MLVWLAEYLVQYNTAFNVVSYITFRAIMALLTAMGIGLWIGPEVIRRLQLLKFGQEVRNDGPESHFKKRGTPTMGGIMILIAIGVSTLLWADLRNSYVWFVLFVLFGYGAVGFVDDYWKIKRKNTDGLIARWKYFWLSVIALIAVFGIYAVGKDTAATQLVVPFFKEFMPQLGIFFIILSYFVIVGTSNAVNLTDGLDGLAIVPTIMVASAFALIAWATGNFNFAQYLHIPFVPNAGELVILCTAIVGAGLGFLWYNTYPAQVFMGDVGSLSLGGALGTIAVLVRQELLLVIMGGVFVVEALSVILQVGSYKLRQKRIFRMAPIHHHFELKGWPEPRVIVCFWIITLMLVLIGLVTLKLR.

The next 10 membrane-spanning stretches (helical) occupy residues 21–41, 73–93, 98–118, 132–152, 168–188, 199–219, 236–256, 263–283, 288–308, and 338–358; these read YITF…LWIG, TMGG…WADL, VWFV…DDYW, WKYF…YAVG, FMPQ…VGTS, GLAI…AWAT, AGEL…FLWY, VFMG…IAVL, LLLV…ILQV, and VIVC…VTLK.

The protein belongs to the glycosyltransferase 4 family. MraY subfamily. Mg(2+) is required as a cofactor.

It is found in the cell inner membrane. The catalysed reaction is UDP-N-acetyl-alpha-D-muramoyl-L-alanyl-gamma-D-glutamyl-meso-2,6-diaminopimeloyl-D-alanyl-D-alanine + di-trans,octa-cis-undecaprenyl phosphate = di-trans,octa-cis-undecaprenyl diphospho-N-acetyl-alpha-D-muramoyl-L-alanyl-D-glutamyl-meso-2,6-diaminopimeloyl-D-alanyl-D-alanine + UMP. The protein operates within cell wall biogenesis; peptidoglycan biosynthesis. Its function is as follows. Catalyzes the initial step of the lipid cycle reactions in the biosynthesis of the cell wall peptidoglycan: transfers peptidoglycan precursor phospho-MurNAc-pentapeptide from UDP-MurNAc-pentapeptide onto the lipid carrier undecaprenyl phosphate, yielding undecaprenyl-pyrophosphoryl-MurNAc-pentapeptide, known as lipid I. The protein is Phospho-N-acetylmuramoyl-pentapeptide-transferase of Actinobacillus pleuropneumoniae serotype 7 (strain AP76).